We begin with the raw amino-acid sequence, 347 residues long: D-alanine--D-alanine ligase (347 aa).

One can recognise an ATP-grasp domain in the interval 134-332 (KLYAKDLGIK…LAQSLPKTPK (199 aa)). Residue 161–216 (LINFNFPFIIKPNSAGSSLGVSVVKEEKELNYALDSAFEYSKEVLIEPFIQGVKEY) coordinates ATP. Asp288, Glu300, and Asn302 together coordinate Mg(2+).

This sequence belongs to the D-alanine--D-alanine ligase family. The cofactor is Mg(2+). Mn(2+) serves as cofactor.

It is found in the cytoplasm. It catalyses the reaction 2 D-alanine + ATP = D-alanyl-D-alanine + ADP + phosphate + H(+). It functions in the pathway cell wall biogenesis; peptidoglycan biosynthesis. Its function is as follows. Cell wall formation. The protein is D-alanine--D-alanine ligase of Helicobacter pylori (strain HPAG1).